The chain runs to 219 residues: Protein VERNALIZATION 2 (219 aa).

The region spanning 138–180 (REAKVMRYREKKKRRRYEKQIRYESRKAYAEMRPRVKGRFAKV) is the CCT domain.

In terms of tissue distribution, mainly expressed in leaves, and at low levels in the shoot apical meristem (SAM).

It is found in the nucleus. In terms of biological role, involved in the regulation of vernalization; this process in essential for flowering in cv. Bd29-1 but seems do not occur in cv. Bd21. This chain is Protein VERNALIZATION 2, found in Brachypodium distachyon (Purple false brome).